A 138-amino-acid polypeptide reads, in one-letter code: Large ribosomal subunit protein uL16c (138 aa).

It belongs to the universal ribosomal protein uL16 family. In terms of assembly, part of the 50S ribosomal subunit.

It is found in the plastid. It localises to the chloroplast. The chain is Large ribosomal subunit protein uL16c from Emiliania huxleyi (Coccolithophore).